Here is a 519-residue protein sequence, read N- to C-terminus: Cobyric acid synthase (519 aa).

A GATase cobBQ-type domain is found at 256-438; that stretch reads WLRVAVPRLP…WHGLFENDAF (183 aa). The Nucleophile role is filled by Cys-337. The active site involves His-430.

This sequence belongs to the CobB/CobQ family. CobQ subfamily.

It functions in the pathway cofactor biosynthesis; adenosylcobalamin biosynthesis. Catalyzes amidations at positions B, D, E, and G on adenosylcobyrinic A,C-diamide. NH(2) groups are provided by glutamine, and one molecule of ATP is hydrogenolyzed for each amidation. In Saccharopolyspora erythraea (strain ATCC 11635 / DSM 40517 / JCM 4748 / NBRC 13426 / NCIMB 8594 / NRRL 2338), this protein is Cobyric acid synthase.